The chain runs to 324 residues: Spheroidene monooxygenase (324 aa).

Residues 226 to 324 are disordered; that stretch reads GKDPVGEALT…PGKGGRKENA (99 aa). Composition is skewed to low complexity over residues 248–278 and 287–313; these read PAAA…VEMP and VVEA…NFKG.

The protein belongs to the CrtA family. The cofactor is heme.

It catalyses the reaction spheroidene + 4 reduced [2Fe-2S]-[ferredoxin] + 2 O2 + 4 H(+) = spheroiden-2-one + 4 oxidized [2Fe-2S]-[ferredoxin] + 3 H2O. The catalysed reaction is spheroidene + 2 reduced [2Fe-2S]-[ferredoxin] + O2 + 2 H(+) = 2-hydroxyspheroidene + 2 oxidized [2Fe-2S]-[ferredoxin] + H2O. The enzyme catalyses 2-hydroxyspheroidene + 2 reduced [2Fe-2S]-[ferredoxin] + O2 + 2 H(+) = 2,2-dihydroxyspheroidene + 2 oxidized [2Fe-2S]-[ferredoxin] + H2O. It carries out the reaction 2,2-dihydroxyspheroidene = spheroiden-2-one + H2O. Its pathway is carotenoid biosynthesis; spheroidene biosynthesis. Involved in the biosynthesis of the carotenoid spheroidene. Catalyzes the introduction of one keto group at the C-2 position of spheroidene. In vitro, can use nonnative substrates and produce oxocarotenoids with a hydroxy and/or a keto group, derived from neurosporene, lycopene, 3,4-didehydrolycopene or 3,4,3',4'-tetradehydrolycopene. This chain is Spheroidene monooxygenase, found in Cereibacter sphaeroides (strain ATCC 17023 / DSM 158 / JCM 6121 / CCUG 31486 / LMG 2827 / NBRC 12203 / NCIMB 8253 / ATH 2.4.1.) (Rhodobacter sphaeroides).